The chain runs to 2479 residues: Centrosomal protein of 290 kDa (2479 aa).

Positions 1-695 (MPPNINWKEI…IESKNAEGIF (695 aa)) are self-association (with itself or C-terminus). Coiled-coil stretches lie at residues 59-565 (MKMK…ERGK), 598-664 (SLKN…MQKD), 697-931 (ASLH…VCEK), 958-1027 (SLSE…IEQA), 1071-1498 (QRAE…ILSR), 1533-1584 (HTLK…LHIL), and 1635-2452 (DSLS…SEQL). The segment covering 149–163 (ALRNEEAENENSKLR) has biased composition (basic and acidic residues). A disordered region spans residues 149-168 (ALRNEEAENENSKLRRENKR). Positions 696-896 (DASLHLKAQV…TVLQVNEKSL (201 aa)) are interaction with IQCB1. A self-association (with itself or N-terminus) region spans residues 1966-2479 (TTGMTVDQVL…EESPVNFPIY (514 aa)). Residues 2458–2479 (SPVAASEEFEDEEESPVNFPIY) form a disordered region.

In terms of assembly, part of the tectonic-like complex (also named B9 complex). Interacts with ATF4 via its N-terminal region. Associates with the BBSome complex, interacting (via N-terminus) with BBS4. Interacts with IQCB1/NPHP5; IQCB1 and CEP290/NPHP6 are proposed to form a functional NPHP5-6 module localized to the centrosome. Interacts with NPHP4; the interaction likely requires additional interactors. Interacts with ZNF423, FAM161A, CEP162, CEP162, CEP131, TALPID3, CCDC13, CC2D2A, RPGRIP1. Can self-associate (homo- or heteromeric). Interacts with CCP110; required for suppressing cilia formation. Interacts with RPGR. Associates (via C-terminus) with microtubules; association to microtubule is reduced in response to cellular stress, such as ultraviolet light (UV) radiation or heat shock, in a process that requires p38 MAP kinase signaling. Interacts with FAM161A. Interacts with PCM1. Interacts with CCDC66. Interacts with ARMC9 and CSPP1. Post-translationally, ubiquitinated. May undergo monoubiquitination; monoubiquitination is inhibited in response to cellular stress, such as ultraviolet light (UV) radiation or heat shock, but does not cause its displacement from centriolar satellites. In terms of tissue distribution, ubiquitous. Expressed strongly in placenta and weakly in brain.

It localises to the cytoplasm. The protein localises to the cytoskeleton. The protein resides in the microtubule organizing center. Its subcellular location is the centrosome. It is found in the centriolar satellite. It localises to the nucleus. The protein localises to the cell projection. The protein resides in the cilium. Its subcellular location is the cilium basal body. It is found in the centriole. It localises to the cytoplasmic vesicle. Its function is as follows. Involved in early and late steps in cilia formation. Its association with CCP110 is required for inhibition of primary cilia formation by CCP110. May play a role in early ciliogenesis in the disappearance of centriolar satellites and in the transition of primary ciliar vesicles (PCVs) to capped ciliary vesicles (CCVs). Required for the centrosomal recruitment of RAB8A and for the targeting of centriole satellite proteins to centrosomes such as of PCM1. Required for the correct localization of ciliary and phototransduction proteins in retinal photoreceptor cells; may play a role in ciliary transport processes. Required for efficient recruitment of RAB8A to primary cilium. In the ciliary transition zone is part of the tectonic-like complex which is required for tissue-specific ciliogenesis and may regulate ciliary membrane composition. Involved in regulation of the BBSome complex integrity, specifically for presence of BBS2, BBS5 and BBS8/TTC8 in the complex, and in ciliary targeting of selected BBSome cargos. May play a role in controlling entry of the BBSome complex to cilia possibly implicating IQCB1/NPHP5. Activates ATF4-mediated transcription. The sequence is that of Centrosomal protein of 290 kDa (CEP290) from Homo sapiens (Human).